Reading from the N-terminus, the 200-residue chain is GTP cyclohydrolase 1 (200 aa).

Cysteine 87, histidine 90, and cysteine 158 together coordinate Zn(2+).

Belongs to the GTP cyclohydrolase I family. As to quaternary structure, toroid-shaped homodecamer, composed of two pentamers of five dimers.

The catalysed reaction is GTP + H2O = 7,8-dihydroneopterin 3'-triphosphate + formate + H(+). It participates in cofactor biosynthesis; 7,8-dihydroneopterin triphosphate biosynthesis; 7,8-dihydroneopterin triphosphate from GTP: step 1/1. In Xanthomonas campestris pv. campestris (strain ATCC 33913 / DSM 3586 / NCPPB 528 / LMG 568 / P 25), this protein is GTP cyclohydrolase 1.